The primary structure comprises 230 residues: Leucyl/phenylalanyl-tRNA--protein transferase (230 aa).

Belongs to the L/F-transferase family.

The protein resides in the cytoplasm. It carries out the reaction N-terminal L-lysyl-[protein] + L-leucyl-tRNA(Leu) = N-terminal L-leucyl-L-lysyl-[protein] + tRNA(Leu) + H(+). It catalyses the reaction N-terminal L-arginyl-[protein] + L-leucyl-tRNA(Leu) = N-terminal L-leucyl-L-arginyl-[protein] + tRNA(Leu) + H(+). The catalysed reaction is L-phenylalanyl-tRNA(Phe) + an N-terminal L-alpha-aminoacyl-[protein] = an N-terminal L-phenylalanyl-L-alpha-aminoacyl-[protein] + tRNA(Phe). Functionally, functions in the N-end rule pathway of protein degradation where it conjugates Leu, Phe and, less efficiently, Met from aminoacyl-tRNAs to the N-termini of proteins containing an N-terminal arginine or lysine. The polypeptide is Leucyl/phenylalanyl-tRNA--protein transferase (Hamiltonella defensa subsp. Acyrthosiphon pisum (strain 5AT)).